Reading from the N-terminus, the 114-residue chain is Large ribosomal subunit protein bL19 (114 aa).

The protein belongs to the bacterial ribosomal protein bL19 family.

This protein is located at the 30S-50S ribosomal subunit interface and may play a role in the structure and function of the aminoacyl-tRNA binding site. In Listeria monocytogenes serovar 1/2a (strain ATCC BAA-679 / EGD-e), this protein is Large ribosomal subunit protein bL19 (rplS).